The following is a 271-amino-acid chain: Isoprenyl transferase (271 aa).

Residue aspartate 35 is part of the active site. Position 35 (aspartate 35) interacts with Mg(2+). Substrate contacts are provided by residues 36 to 39 (GNGR), tryptophan 40, arginine 48, histidine 52, and 80 to 82 (STE). The active-site Proton acceptor is the asparagine 83. Substrate-binding positions include tryptophan 84, arginine 86, arginine 207, and 213–215 (RIS). A Mg(2+)-binding site is contributed by glutamate 226.

It belongs to the UPP synthase family. Homodimer. Mg(2+) is required as a cofactor.

Functionally, catalyzes the condensation of isopentenyl diphosphate (IPP) with allylic pyrophosphates generating different type of terpenoids. The sequence is that of Isoprenyl transferase from Enterococcus faecalis (strain ATCC 700802 / V583).